A 213-amino-acid chain; its full sequence is MADNSTHPIMKILESFGLTDVILAFFLSMVVGLLLGALVYMILTWMSRRRASATITRIPVHQSRSTTRSSSPRSRLGYSRHSSGYDRRSNNSLASAAFSFHRQTSSSPIDYGDSTGRKSSFRASTFHPLLQCSQIAREAEEGAQGSLPRTPTLTTSPGAAGSTSTVSSMITPPRARNRPDSFWGNSNLRGFHAGQTPPPAYDSIIRAYQETTT.

A Bipartite nuclear localization signal motif is present at residues Arg48–Arg68. Disordered regions lie at residues Pro59–Ser89 and Ala139–Tyr201. Composition is skewed to low complexity over residues Ser63–Arg75 and Ser146–Ser168.

The protein belongs to the MYCT1 family.

It is found in the nucleus. This is Myc target protein 1 homolog (myct1) from Danio rerio (Zebrafish).